We begin with the raw amino-acid sequence, 91 residues long: UPF0147 protein APE_2336a (91 aa).

Belongs to the UPF0147 family.

The polypeptide is UPF0147 protein APE_2336a (Aeropyrum pernix (strain ATCC 700893 / DSM 11879 / JCM 9820 / NBRC 100138 / K1)).